Consider the following 113-residue polypeptide: Large ribosomal subunit protein uL24 (113 aa).

Belongs to the universal ribosomal protein uL24 family. As to quaternary structure, part of the 50S ribosomal subunit.

In terms of biological role, one of two assembly initiator proteins, it binds directly to the 5'-end of the 23S rRNA, where it nucleates assembly of the 50S subunit. One of the proteins that surrounds the polypeptide exit tunnel on the outside of the subunit. This Rickettsia typhi (strain ATCC VR-144 / Wilmington) protein is Large ribosomal subunit protein uL24.